A 225-amino-acid polypeptide reads, in one-letter code: UPF0173 metal-dependent hydrolase Pars_0810 (225 aa).

It belongs to the UPF0173 family.

The protein is UPF0173 metal-dependent hydrolase Pars_0810 of Pyrobaculum arsenaticum (strain DSM 13514 / JCM 11321 / PZ6).